Here is a 678-residue protein sequence, read N- to C-terminus: UvrABC system protein B (678 aa).

The Helicase ATP-binding domain maps to 31–417; it reads ENLNDGLAHQ…KSGTEIIDQV (387 aa). 44–51 lines the ATP pocket; the sequence is GVTGSGKT. Positions 97–120 match the Beta-hairpin motif; sequence YYDYYQPEAYVPSSDTFIEKDASI. Residues 436-602 form the Helicase C-terminal domain; it reads QVDDLLSEAR…GLNKKVGELL (167 aa). Residues 603–625 form a disordered region; sequence DIGQGGSNKSRNKPRSQKAAEPA. The UVR domain occupies 638-673; the sequence is QQQIKKLEQQMYKFAQDLEFEKAAAIRDQLHKLREQ.

This sequence belongs to the UvrB family. As to quaternary structure, forms a heterotetramer with UvrA during the search for lesions. Interacts with UvrC in an incision complex.

The protein localises to the cytoplasm. The UvrABC repair system catalyzes the recognition and processing of DNA lesions. A damage recognition complex composed of 2 UvrA and 2 UvrB subunits scans DNA for abnormalities. Upon binding of the UvrA(2)B(2) complex to a putative damaged site, the DNA wraps around one UvrB monomer. DNA wrap is dependent on ATP binding by UvrB and probably causes local melting of the DNA helix, facilitating insertion of UvrB beta-hairpin between the DNA strands. Then UvrB probes one DNA strand for the presence of a lesion. If a lesion is found the UvrA subunits dissociate and the UvrB-DNA preincision complex is formed. This complex is subsequently bound by UvrC and the second UvrB is released. If no lesion is found, the DNA wraps around the other UvrB subunit that will check the other stand for damage. The chain is UvrABC system protein B from Mannheimia succiniciproducens (strain KCTC 0769BP / MBEL55E).